A 190-amino-acid polypeptide reads, in one-letter code: MLKSTLAAVAAVFALSALSPAALAAKGDPHVLLTTSAGNIELELNSQKAPVSVKNFVDYVNSGFYNNTTFHRVIPGFMIQGGGFNEQMQQKKPNPPIKNEADNGLRNTRGTIAMARTADKDSATSQFFINVADNAFLDHGQRDFGYAVFGKVVKGMDVADKISQVPTHDVGPYQNVPTKPVVILSAKVLP.

An N-terminal signal peptide occupies residues 1-24; the sequence is MLKSTLAAVAAVFALSALSPAALA. The region spanning 27–188 is the PPIase cyclophilin-type domain; the sequence is GDPHVLLTTS…KPVVILSAKV (162 aa).

It belongs to the cyclophilin-type PPIase family.

The protein localises to the periplasm. It carries out the reaction [protein]-peptidylproline (omega=180) = [protein]-peptidylproline (omega=0). Its function is as follows. PPIases accelerate the folding of proteins. It catalyzes the cis-trans isomerization of proline imidic peptide bonds in oligopeptides. This chain is Peptidyl-prolyl cis-trans isomerase A (ppiA), found in Salmonella typhimurium (strain LT2 / SGSC1412 / ATCC 700720).